The sequence spans 62 residues: Large ribosomal subunit protein uL30 (62 aa).

Belongs to the universal ribosomal protein uL30 family. As to quaternary structure, part of the 50S ribosomal subunit.

This Ruegeria pomeroyi (strain ATCC 700808 / DSM 15171 / DSS-3) (Silicibacter pomeroyi) protein is Large ribosomal subunit protein uL30.